Reading from the N-terminus, the 267-residue chain is Glutamate racemase (267 aa).

Substrate-binding positions include 9–10 (DS) and 41–42 (YG). The active-site Proton donor/acceptor is the Cys72. Substrate is bound at residue 73–74 (NT). Cys184 (proton donor/acceptor) is an active-site residue. 185–186 (TH) provides a ligand contact to substrate.

This sequence belongs to the aspartate/glutamate racemases family.

It catalyses the reaction L-glutamate = D-glutamate. The protein operates within cell wall biogenesis; peptidoglycan biosynthesis. Functionally, provides the (R)-glutamate required for cell wall biosynthesis. The polypeptide is Glutamate racemase (Staphylococcus epidermidis (strain ATCC 12228 / FDA PCI 1200)).